Reading from the N-terminus, the 376-residue chain is Probable allantoicase (376 aa).

The protein belongs to the allantoicase family.

The enzyme catalyses allantoate + H2O = (S)-ureidoglycolate + urea. It functions in the pathway nitrogen metabolism; (S)-allantoin degradation; (S)-ureidoglycolate from allantoate (aminidohydrolase route): step 1/1. The sequence is that of Probable allantoicase from Streptomyces avermitilis (strain ATCC 31267 / DSM 46492 / JCM 5070 / NBRC 14893 / NCIMB 12804 / NRRL 8165 / MA-4680).